The chain runs to 263 residues: Indolethylamine N-methyltransferase (263 aa).

Lys-13 carries the post-translational modification N6-succinyllysine. Residues Tyr-20, Tyr-25, 63–64 (GS), Tyr-69, Asp-85, and Asn-90 each bind S-adenosyl-L-methionine. Lys-96 bears the N6-succinyllysine mark. S-adenosyl-L-methionine contacts are provided by residues 142 to 143 (DA) and Leu-163.

It belongs to the class I-like SAM-binding methyltransferase superfamily. NNMT/PNMT/TEMT family. As to quaternary structure, monomer. In terms of tissue distribution, highly expressed in lung, also detected in liver and at very low levels in brain.

It is found in the cytoplasm. It carries out the reaction a tertiary amine + S-adenosyl-L-methionine = a methylated tertiary amine + S-adenosyl-L-homocysteine + H(+). The catalysed reaction is a secondary amine + S-adenosyl-L-methionine = a methylated secondary amine + S-adenosyl-L-homocysteine + H(+). It catalyses the reaction a primary amine + S-adenosyl-L-methionine = a methylated primary amine + S-adenosyl-L-homocysteine + H(+). The enzyme catalyses dimethyl sulfide + S-adenosyl-L-methionine = trimethylsulfonium + S-adenosyl-L-homocysteine. Catalyzes the N-methylation of tryptamine and structurally related compounds. Functions as a thioether S-methyltransferase and is active with a variety of thioethers and the corresponding selenium and tellurium compounds, including 3-methylthiopropionaldehyde, dimethyl selenide, dimethyl telluride, 2-methylthioethylamine, 2-methylthioethanol, methyl-n-propyl sulfide and diethyl sulfide. Plays an important role in the detoxification of selenium compounds. The polypeptide is Indolethylamine N-methyltransferase (INMT) (Oryctolagus cuniculus (Rabbit)).